The following is a 205-amino-acid chain: MAGRAQGARWMARRVIGLTGGIATGKSTVGRLLAGWGIPVIDADLLAREAVAPGSAALAEIVQHYGSTMLTNAGALDRSALARIIFSDPQERRWVESRIHPSVRAAMQAAVEREPGTICLMIPLLFEAGMTDLVTEIWVVSCKPERQHARLKERDGLDDQAIAARIASQWPLTEKVRHADVVLDNDGDFAHLKIQVERALDQASI.

Residues valine 15–isoleucine 205 enclose the DPCK domain. ATP is bound at residue alanine 23–threonine 28.

The protein belongs to the CoaE family.

The protein resides in the cytoplasm. The enzyme catalyses 3'-dephospho-CoA + ATP = ADP + CoA + H(+). It functions in the pathway cofactor biosynthesis; coenzyme A biosynthesis; CoA from (R)-pantothenate: step 5/5. Its function is as follows. Catalyzes the phosphorylation of the 3'-hydroxyl group of dephosphocoenzyme A to form coenzyme A. The sequence is that of Dephospho-CoA kinase from Gloeobacter violaceus (strain ATCC 29082 / PCC 7421).